A 356-amino-acid chain; its full sequence is Arginine kinase Scy s 2 (356 aa).

Positions 9–91 (KLEEGFKKLE…FDPIIEDYHK (83 aa)) constitute a Phosphagen kinase N-terminal domain. 64 to 68 (GVGVY) provides a ligand contact to L-arginine. Residues 119 to 356 (FVISTRVRCG…LELIKMEKEM (238 aa)) enclose the Phosphagen kinase C-terminal domain. ATP is bound by residues 122–126 (STRVR) and H185. An L-arginine-binding site is contributed by E225. R229 provides a ligand contact to ATP. C271 is a binding site for L-arginine. Residues 280-284 (RASVH) and 309-314 (RGTRGE) each bind ATP. E314 contributes to the L-arginine binding site.

Belongs to the ATP:guanido phosphotransferase family. In terms of tissue distribution, muscle (at protein level).

It carries out the reaction L-arginine + ATP = N(omega)-phospho-L-arginine + ADP + H(+). Functionally, catalyzes the reversible transfer of high energy ATP gamma-phosphate group to L-arginine. This is Arginine kinase Scy s 2 from Scylla serrata (Mud crab).